The chain runs to 463 residues: Elongation factor 1-alpha (463 aa).

Residues 8-245 (KTHLNIVIIG…DALVPPVRPA (238 aa)) enclose the tr-type G domain. The interval 17–24 (GHVDSGKS) is G1. Position 17–24 (17–24 (GHVDSGKS)) interacts with GTP. A G2 region spans residues 73-77 (GITID). The segment at 94–97 (DAPG) is G3. GTP-binding positions include 94-98 (DAPGH) and 156-159 (NKMD). Residues 156–159 (NKMD) form a G4 region. Positions 197 to 199 (SGW) are G5.

The protein belongs to the TRAFAC class translation factor GTPase superfamily. Classic translation factor GTPase family. EF-Tu/EF-1A subfamily. As to quaternary structure, the 42S RNP particle comprises four subunits each of which contains one molecule of 5S RNA, three molecules of tRNA, two molecules of EF1-alpha and one molecule of the 5S RNA binding protein 43.

Its subcellular location is the cytoplasm. Its function is as follows. This protein is one of two protein components of a 42S RNP particle that is very abundant in previtellogenic oocytes. A major function served by 42sp50 appears to be the storage of tRNAs for later use in oogenesis and early embryogenesis. Purified 42S particles can directly transfer aminoacyl tRNA to ribosomes. The chain is Elongation factor 1-alpha from Xenopus laevis (African clawed frog).